Reading from the N-terminus, the 212-residue chain is Ribonuclease HII (212 aa).

In terms of domain architecture, RNase H type-2 spans 1–206 (MICGVDEAGK…VKNLLHQKNQ (206 aa)). Positions 6, 7, and 101 each coordinate a divalent metal cation.

Belongs to the RNase HII family. Mn(2+) is required as a cofactor. The cofactor is Mg(2+).

It is found in the cytoplasm. The enzyme catalyses Endonucleolytic cleavage to 5'-phosphomonoester.. Its function is as follows. Endonuclease that specifically degrades the RNA of RNA-DNA hybrids. This chain is Ribonuclease HII, found in Methanospirillum hungatei JF-1 (strain ATCC 27890 / DSM 864 / NBRC 100397 / JF-1).